Here is a 249-residue protein sequence, read N- to C-terminus: Triosephosphate isomerase (249 aa).

Residues Asn-10 and Lys-12 each coordinate substrate. His-94 serves as the catalytic Electrophile. Glu-166 serves as the catalytic Proton acceptor.

This sequence belongs to the triosephosphate isomerase family. In terms of assembly, homodimer.

The catalysed reaction is D-glyceraldehyde 3-phosphate = dihydroxyacetone phosphate. It functions in the pathway carbohydrate biosynthesis; gluconeogenesis. The protein operates within carbohydrate degradation; glycolysis; D-glyceraldehyde 3-phosphate from glycerone phosphate: step 1/1. This Emericella nidulans (strain FGSC A4 / ATCC 38163 / CBS 112.46 / NRRL 194 / M139) (Aspergillus nidulans) protein is Triosephosphate isomerase (tpiA).